The sequence spans 581 residues: Arginine--tRNA ligase (581 aa).

The short motif at 122-132 (PNVAKPMHVGH) is the 'HIGH' region element.

The protein belongs to the class-I aminoacyl-tRNA synthetase family. As to quaternary structure, monomer.

It is found in the cytoplasm. The catalysed reaction is tRNA(Arg) + L-arginine + ATP = L-arginyl-tRNA(Arg) + AMP + diphosphate. The sequence is that of Arginine--tRNA ligase from Francisella tularensis subsp. tularensis (strain FSC 198).